The sequence spans 3387 residues: Genome polyprotein (3387 aa).

Residues 1–100 lie on the Cytoplasmic side of the membrane; it reads MNQRKKVVRP…LNILNGRKRS (100 aa). The hydrophobic; homodimerization of capsid protein C stretch occupies residues 36-71; the sequence is LFSGKGPLRMVLAFITFLRVLSIPPTAGILKRWGQL. Residues 100–113 constitute a propeptide, ER anchor for the capsid protein C, removed in mature form by serine protease NS3; that stretch reads STMTLLCLIPTAMA. The helical transmembrane segment at 101-117 threads the bilayer; the sequence is TMTLLCLIPTAMAFHLS. The Extracellular segment spans residues 118–237; sequence TRDGEPLMIV…GAWKHAQRVE (120 aa). An N-linked (GlcNAc...) asparagine; by host glycan is attached at asparagine 182. A helical membrane pass occupies residues 238 to 258; that stretch reads SWILRNPGFALLAGFMAYMIG. At 259-265 the chain is on the cytoplasmic side; it reads QTGIQRT. The helical transmembrane segment at 266 to 279 threads the bilayer; it reads VFFVLMMLVAPSYG. Topologically, residues 280–723 are extracellular; that stretch reads MRCVGVGNRD…AVHQVFGSVY (444 aa). Intrachain disulfides connect cysteine 282-cysteine 309, cysteine 339-cysteine 400, cysteine 353-cysteine 384, cysteine 371-cysteine 395, cysteine 464-cysteine 564, and cysteine 581-cysteine 612. N-linked (GlcNAc...) asparagine; by host glycosylation occurs at asparagine 346. A fusion peptide region spans residues 377–390; the sequence is DRGWGNGCGLFGKG. A helical transmembrane segment spans residues 724–746; sequence TTMFGGVSWMVRILIGFLVLWIG. Residues 747 to 750 are Cytoplasmic-facing; sequence TNSR. Residues 751 to 771 form a helical membrane-spanning segment; sequence NTSMAMTCIAVGGITLFLGFT. At 772–1194 the chain is on the extracellular side; that stretch reads VHADTGCAVS…MLGDTMSGRM (423 aa). 6 disulfide bridges follow: cysteine 778-cysteine 789, cysteine 829-cysteine 917, cysteine 953-cysteine 997, cysteine 1054-cysteine 1103, cysteine 1065-cysteine 1087, and cysteine 1086-cysteine 1090. Residues asparagine 904 and asparagine 981 are each glycosylated (N-linked (GlcNAc...) asparagine; by host). Residues 1195–1218 traverse the membrane as a helical segment; it reads GGQIHLAIMAVFKMSPGYVLGIFL. Topologically, residues 1219–1224 are lumenal; that stretch reads RKLTSR. A helical membrane pass occupies residues 1225-1243; sequence ETALMVIGMAMTTVLSIPH. The Cytoplasmic segment spans residues 1244 to 1267; it reads DLMEFIDGISLGLILLKMVTHFDN. The chain crosses the membrane as a helical span at residues 1268–1288; the sequence is TQVGTLALSLTFIRSTMPLVM. Alanine 1289 is a topological domain (lumenal). Residues 1290 to 1308 form a helical membrane-spanning segment; sequence WRTIMAVLFVVTLIPLCRT. Over 1309–1316 the chain is Lumenal; the sequence is SCLQKQSH. The helical transmembrane segment at 1317-1337 threads the bilayer; the sequence is WVEITALILGAQALPVYLMTL. Residues 1338 to 1345 are Cytoplasmic-facing; it reads MKGASKRS. Residues 1346–1366 traverse the membrane as a helical segment; the sequence is WPLNEGIMAVGLVSLLGSALL. The Lumenal segment spans residues 1367-1369; it reads KND. The chain crosses the membrane as a helical span at residues 1370 to 1390; the sequence is VPLAGPMVAGGLLLAAYVMSG. Residues 1391–1437 are Cytoplasmic-facing; it reads SSADLSLEKAANVQWDEMADITGSSPIIEVKQDEDGSFSIRDIEETN. The interval 1397-1436 is interacts with and activates NS3 protease; that stretch reads LEKAANVQWDEMADITGSSPIIEVKQDEDGSFSIRDIEET. An intramembrane region (helical) is located at residues 1438–1458; that stretch reads MITLLVKLALITVSGLYPLAI. Residues 1459–2146 are Cytoplasmic-facing; that stretch reads PVTMTLWYMW…LNELPESLET (688 aa). The 178-residue stretch at 1475-1652 folds into the Peptidase S7 domain; that stretch reads SGALWDVPSP…ERTGEPDYEV (178 aa). Catalysis depends on charge relay system; for serine protease NS3 activity residues histidine 1525, aspartate 1549, and serine 1609. One can recognise a Helicase ATP-binding domain in the interval 1654–1810; the sequence is EDIFRKKRLT…QSNSPIEDIE (157 aa). The important for RNA-binding stretch occupies residues 1658–1661; that stretch reads RKKR. 1667–1674 is an ATP binding site; the sequence is LHPGAGKT. The DEAH box motif lies at 1758–1761; sequence DEAH. One can recognise a Helicase C-terminal domain in the interval 1820–1987; sequence TGFDWITDYQ…IIPTLFGPER (168 aa). Lysine 1862 is modified (N6-acetyllysine; by host). A helical transmembrane segment spans residues 2147 to 2167; sequence LMLVALLGAMTAGIFLFFMQG. The Lumenal segment spans residues 2168–2169; it reads KG. Residues 2170-2190 constitute an intramembrane region (helical); the sequence is IGKLSMGLIAIAVASGLLWVA. Residue glutamate 2191 is a topological domain, lumenal. Residues 2192–2212 form a helical membrane-spanning segment; it reads IQPQWIAASIILEFFLMVLLI. The Cytoplasmic segment spans residues 2213–2225; that stretch reads PEPEKQRTPQDNQ. The helical transmembrane segment at 2226 to 2246 threads the bilayer; sequence LIYVILTILTIIGLIAANEMG. Topologically, residues 2247 to 2270 are lumenal; the sequence is LIEKTKTDFGFYQVKTETTILDVD. Residues 2271-2291 constitute an intramembrane region (helical); the sequence is LRPASAWTLYAVATTILTPML. The Lumenal portion of the chain corresponds to 2292-2301; the sequence is RHTIENTSAN. N-linked (GlcNAc...) asparagine; by host glycosylation is found at asparagine 2297 and asparagine 2301. The helical intramembrane region spans 2302 to 2322; the sequence is LSLAAIANQAAVLMGLGKGWP. Over 2323-2343 the chain is Lumenal; the sequence is LHRMDLGVPLLAMGCYSQVNP. A helical transmembrane segment spans residues 2344-2364; it reads TTLIASLVMLLVHYAIIGPGL. At 2365 to 2409 the chain is on the cytoplasmic side; it reads QAKATREAQKRTAAGIMKNPTVDGITVIDLEPISYDPKFEKQLGQ. Residues 2410–2430 form a helical membrane-spanning segment; that stretch reads VMLLVLCAGQLLLMRTTWAFC. The Lumenal segment spans residues 2431-2455; the sequence is EVLTLATGPVLTLWEGNPGRFWNTT. N-linked (GlcNAc...) asparagine; by host glycosylation is present at asparagine 2453. A helical membrane pass occupies residues 2456–2476; that stretch reads IAVSTANIFRGSYLAGAGLAF. Residues 2477 to 3387 lie on the Cytoplasmic side of the membrane; it reads SLIKNAQTPR…SAPFESEGVL (911 aa). Positions 2489 to 2751 constitute an mRNA cap 0-1 NS5-type MT domain; it reads TGTTGETLGE…DVDLGAGTRS (263 aa). Serine 2543 is a binding site for S-adenosyl-L-methionine. Residue serine 2543 is modified to Phosphoserine. Lysine 2548 acts as the For 2'-O-MTase activity in catalysis. Positions 2564 to 2567 match the SUMO-interacting motif motif; sequence VVDL. S-adenosyl-L-methionine is bound by residues glycine 2573, tryptophan 2574, threonine 2591, lysine 2592, aspartate 2618, and valine 2619. Aspartate 2633 (for 2'-O-MTase activity) is an active-site residue. Residue isoleucine 2634 coordinates S-adenosyl-L-methionine. Active-site for 2'-O-MTase activity residues include lysine 2668 and glutamate 2704. Tyrosine 2706 provides a ligand contact to S-adenosyl-L-methionine. Zn(2+) is bound by residues glutamate 2925, histidine 2929, cysteine 2934, and cysteine 2937. A RdRp catalytic domain is found at 3016-3166; sequence LIYADDTAGW…PLDERFSTSL (151 aa). Histidine 3200, cysteine 3216, and cysteine 3335 together coordinate Zn(2+).

This sequence in the N-terminal section; belongs to the class I-like SAM-binding methyltransferase superfamily. mRNA cap 0-1 NS5-type methyltransferase family. In terms of assembly, homodimer. Interacts (via N-terminus) with host EXOC1 (via C-terminus); this interaction results in EXOC1 degradation through the proteasome degradation pathway. Forms heterodimers with envelope protein E in the endoplasmic reticulum and Golgi. As to quaternary structure, homodimer; in the endoplasmic reticulum and Golgi. Interacts with protein prM. Interacts with non-structural protein 1. In terms of assembly, homodimer; Homohexamer when secreted. Interacts with envelope protein E. Interacts (via N-terminus) with serine protease NS3. As to quaternary structure, forms a heterodimer with serine protease NS3. May form homooligomers. In terms of assembly, forms a heterodimer with NS2B. Interacts with NS4B. Interacts with unphosphorylated RNA-directed RNA polymerase NS5; this interaction stimulates RNA-directed RNA polymerase NS5 guanylyltransferase activity. Interacts with host MAVS; this interaction inhibits the synthesis of IFN-beta. Interacts with host AUP1; the interaction occurs in the presence of Dengue virus NS4B and induces lipophagy which facilitates production of virus progeny particles. As to quaternary structure, interacts with serine protease NS3. In terms of assembly, homodimer. Interacts with host STAT2; this interaction inhibits the phosphorylation of the latter, and, when all viral proteins are present (polyprotein), targets STAT2 for degradation. Interacts with serine protease NS3. Interacts with host PAF1 complex; the interaction may prevent the recruitment of the PAF1 complex to interferon-responsive genes, and thus reduces the immune response. In terms of processing, specific enzymatic cleavages in vivo yield mature proteins. Cleavages in the lumen of endoplasmic reticulum are performed by host signal peptidase, whereas cleavages in the cytoplasmic side are performed by serine protease NS3. Signal cleavage at the 2K-4B site requires a prior NS3 protease-mediated cleavage at the 4A-2K site. Cleaved in post-Golgi vesicles by a host furin, releasing the mature small envelope protein M, and peptide pr. This cleavage is incomplete as up to 30% of viral particles still carry uncleaved prM. Post-translationally, N-glycosylated. In terms of processing, N-glycosylated. The excreted form is glycosylated and this is required for efficient secretion of the protein from infected cells. Acetylated by host KAT5. Acetylation modulates NS3 RNA-binding and unwinding activities and plays an important positive role for viral replication. Post-translationally, sumoylation of RNA-directed RNA polymerase NS5 increases NS5 protein stability allowing proper viral RNA replication. In terms of processing, phosphorylated on serines residues. This phosphorylation may trigger NS5 nuclear localization.

The protein resides in the virion. Its subcellular location is the host nucleus. The protein localises to the host cytoplasm. It localises to the host perinuclear region. It is found in the secreted. The protein resides in the virion membrane. Its subcellular location is the host endoplasmic reticulum membrane. The protein localises to the host mitochondrion. It carries out the reaction Selective hydrolysis of -Xaa-Xaa-|-Yaa- bonds in which each of the Xaa can be either Arg or Lys and Yaa can be either Ser or Ala.. The enzyme catalyses RNA(n) + a ribonucleoside 5'-triphosphate = RNA(n+1) + diphosphate. The catalysed reaction is a ribonucleoside 5'-triphosphate + H2O = a ribonucleoside 5'-diphosphate + phosphate + H(+). It catalyses the reaction ATP + H2O = ADP + phosphate + H(+). It carries out the reaction a 5'-end (5'-triphosphoguanosine)-ribonucleoside in mRNA + S-adenosyl-L-methionine = a 5'-end (N(7)-methyl 5'-triphosphoguanosine)-ribonucleoside in mRNA + S-adenosyl-L-homocysteine. The enzyme catalyses a 5'-end (N(7)-methyl 5'-triphosphoguanosine)-ribonucleoside in mRNA + S-adenosyl-L-methionine = a 5'-end (N(7)-methyl 5'-triphosphoguanosine)-(2'-O-methyl-ribonucleoside) in mRNA + S-adenosyl-L-homocysteine + H(+). Plays a role in virus budding by binding to the cell membrane and gathering the viral RNA into a nucleocapsid that forms the core of a mature virus particle. During virus entry, may induce genome penetration into the host cytoplasm after hemifusion induced by the surface proteins. Can migrate to the cell nucleus where it modulates host functions. Overcomes the anti-viral effects of host EXOC1 by sequestering and degrading the latter through the proteasome degradation pathway. Its function is as follows. Inhibits RNA silencing by interfering with host Dicer. Functionally, prevents premature fusion activity of envelope proteins in trans-Golgi by binding to envelope protein E at pH6.0. After virion release in extracellular space, gets dissociated from E dimers. In terms of biological role, acts as a chaperone for envelope protein E during intracellular virion assembly by masking and inactivating envelope protein E fusion peptide. prM is the only viral peptide matured by host furin in the trans-Golgi network probably to avoid catastrophic activation of the viral fusion activity in acidic Golgi compartment prior to virion release. prM-E cleavage is inefficient, and many virions are only partially matured. These uncleaved prM would play a role in immune evasion. May play a role in virus budding. Exerts cytotoxic effects by activating a mitochondrial apoptotic pathway through M ectodomain. May display a viroporin activity. Its function is as follows. Binds to host cell surface receptor and mediates fusion between viral and cellular membranes. Envelope protein is synthesized in the endoplasmic reticulum in the form of heterodimer with protein prM. They play a role in virion budding in the ER, and the newly formed immature particle is covered with 60 spikes composed of heterodimer between precursor prM and envelope protein E. The virion is transported to the Golgi apparatus where the low pH causes dissociation of PrM-E heterodimers and formation of E homodimers. prM-E cleavage is inefficient, and many virions are only partially matured. These uncleaved prM would play a role in immune evasion. Functionally, involved in immune evasion, pathogenesis and viral replication. Once cleaved off the polyprotein, is targeted to three destinations: the viral replication cycle, the plasma membrane and the extracellular compartment. Essential for viral replication. Required for formation of the replication complex and recruitment of other non-structural proteins to the ER-derived membrane structures. Excreted as a hexameric lipoparticle that plays a role against host immune response. Antagonizing the complement function. Binds to the host macrophages and dendritic cells. Inhibits signal transduction originating from Toll-like receptor 3 (TLR3). In terms of biological role, disrupts the host endothelial glycocalyx layer of host pulmonary microvascular endothelial cells, inducing degradation of sialic acid and shedding of heparan sulfate proteoglycans. NS1 induces expression of sialidases, heparanase, and activates cathepsin L, which activates heparanase via enzymatic cleavage. These effects are probably linked to the endothelial hyperpermeability observed in severe dengue disease. Component of the viral RNA replication complex that functions in virion assembly and antagonizes the host immune response. Its function is as follows. Required cofactor for the serine protease function of NS3. May have membrane-destabilizing activity and form viroporins. Functionally, displays three enzymatic activities: serine protease, NTPase and RNA helicase. NS3 serine protease, in association with NS2B, performs its autocleavage and cleaves the polyprotein at dibasic sites in the cytoplasm: C-prM, NS2A-NS2B, NS2B-NS3, NS3-NS4A, NS4A-2K and NS4B-NS5. NS3 RNA helicase binds RNA and unwinds dsRNA in the 3' to 5' direction. In terms of biological role, regulates the ATPase activity of the NS3 helicase activity. NS4A allows NS3 helicase to conserve energy during unwinding. Plays a role in the inhibition of the host innate immune response. Interacts with host MAVS and thereby prevents the interaction between RIGI and MAVS. In turn, IFN-beta production is impaired. Interacts with host AUP1 which mediates induction of lipophagy in host cells and facilitates production of virus progeny particles. Functions as a signal peptide for NS4B and is required for the interferon antagonism activity of the latter. Its function is as follows. Induces the formation of ER-derived membrane vesicles where the viral replication takes place. Inhibits interferon (IFN)-induced host STAT1 phosphorylation and nuclear translocation, thereby preventing the establishment of cellular antiviral state by blocking the IFN-alpha/beta pathway. Functionally, replicates the viral (+) and (-) RNA genome, and performs the capping of genomes in the cytoplasm. NS5 methylates viral RNA cap at guanine N-7 and ribose 2'-O positions. Besides its role in RNA genome replication, also prevents the establishment of cellular antiviral state by blocking the interferon-alpha/beta (IFN-alpha/beta) signaling pathway. Inhibits host TYK2 and STAT2 phosphorylation, thereby preventing activation of JAK-STAT signaling pathway. May reduce immune responses by preventing the recruitment of the host PAF1 complex to interferon-responsive genes. The protein is Genome polyprotein of Aedes aegypti (Yellowfever mosquito).